The chain runs to 672 residues: UvrABC system protein B (672 aa).

A Helicase ATP-binding domain is found at alanine 26–tyrosine 181. Residue glycine 39–threonine 46 coordinates ATP. The Beta-hairpin motif lies at tyrosine 92 to isoleucine 115. The region spanning glutamine 430–valine 592 is the Helicase C-terminal domain. Residues alanine 631 to glycine 666 enclose the UVR domain.

The protein belongs to the UvrB family. In terms of assembly, forms a heterotetramer with UvrA during the search for lesions. Interacts with UvrC in an incision complex.

The protein resides in the cytoplasm. The UvrABC repair system catalyzes the recognition and processing of DNA lesions. A damage recognition complex composed of 2 UvrA and 2 UvrB subunits scans DNA for abnormalities. Upon binding of the UvrA(2)B(2) complex to a putative damaged site, the DNA wraps around one UvrB monomer. DNA wrap is dependent on ATP binding by UvrB and probably causes local melting of the DNA helix, facilitating insertion of UvrB beta-hairpin between the DNA strands. Then UvrB probes one DNA strand for the presence of a lesion. If a lesion is found the UvrA subunits dissociate and the UvrB-DNA preincision complex is formed. This complex is subsequently bound by UvrC and the second UvrB is released. If no lesion is found, the DNA wraps around the other UvrB subunit that will check the other stand for damage. The protein is UvrABC system protein B of Coxiella burnetii (strain Dugway 5J108-111).